A 239-amino-acid polypeptide reads, in one-letter code: Uridylate kinase (239 aa).

13-16 lines the ATP pocket; it reads KVSG. Gly-55 serves as a coordination point for UMP. The ATP site is built by Gly-56 and Arg-60. Residues Asp-75 and 136-143 contribute to the UMP site; that span reads TGNPFFTT. The ATP site is built by Thr-163, Gln-164, Tyr-169, and Asp-172.

This sequence belongs to the UMP kinase family. Homohexamer.

The protein resides in the cytoplasm. The catalysed reaction is UMP + ATP = UDP + ADP. It participates in pyrimidine metabolism; CTP biosynthesis via de novo pathway; UDP from UMP (UMPK route): step 1/1. With respect to regulation, inhibited by UTP. Catalyzes the reversible phosphorylation of UMP to UDP. The chain is Uridylate kinase from Bartonella henselae (strain ATCC 49882 / DSM 28221 / CCUG 30454 / Houston 1) (Rochalimaea henselae).